The following is a 170-amino-acid chain: Class I hydrophobin E (170 aa).

A signal peptide spans Met1 to Ala19. Cystine bridges form between Cys62–Cys126, Cys70–Cys117, Cys71–Cys105, and Cys127–Cys139.

This sequence belongs to the fungal hydrophobin family.

The protein localises to the secreted. The protein resides in the cell wall. Its function is as follows. Aerial growth, conidiation, and dispersal of filamentous fungi in the environment rely upon a capability of their secreting small amphipathic proteins called hydrophobins (HPBs) with low sequence identity. Class I can self-assemble into an outermost layer of rodlet bundles on aerial cell surfaces, conferring cellular hydrophobicity that supports fungal growth, development and dispersal; whereas Class II form highly ordered films at water-air interfaces through intermolecular interactions but contribute nothing to the rodlet structure. In P.expansum, hydrophobins contribute to germination, tolerance to cold stress and mycotoxins patulin and citrinin production. This Penicillium expansum (Blue mold rot fungus) protein is Class I hydrophobin E.